The sequence spans 503 residues: MEEFQGYFELDRSRQHDFLYPLLFREYIYALAHDHGLKKSILFENAGYDNKSSSIIVKRLITRMYQQNPLIFSANDSIQNPFFGQNKNFYSQIISEGFAVIVEIPFSLRLVSSLERKEIAKSHKLRAIHSIFPFLEDKFSHLDYVSDVLIPYHIHLEILVQTLRYWVNDASSLHLLRFFLHEYWNSLITQKNHITIFSKGNPRLFLFLYNSHICEYEYFFLFLRNQSSHLRSTSSGIFFERIYFYVKIEHFVKVFYDNDFQCILWFFKDPFMHYVRYQGKSILASKDTPLLMKKWKYYLVNLWQYHFYAWFQPGRIDINQLCKYSLYFLGYRSSVRLNPSVVRSQMLENSFLINNAMKKFETIVPIIPLIGSLSKANFCDTLGHPISKPTRADSSDSDIIDRFLRISRNLSHYHSGSSKKKSLYRVKYILRLSCVKTLARKHKKTVRTFLKRLGSEFLEEFLTEEEVVLSLIFPRTYSTSRRLYRGRIWYLDITSINDLVNYE.

The protein belongs to the intron maturase 2 family. MatK subfamily.

The protein resides in the plastid. Its subcellular location is the chloroplast. Its function is as follows. Usually encoded in the trnK tRNA gene intron. Probably assists in splicing its own and other chloroplast group II introns. In Eucalyptus globulus subsp. globulus (Tasmanian blue gum), this protein is Maturase K.